A 287-amino-acid polypeptide reads, in one-letter code: Bifunctional protein FolD (287 aa).

NADP(+) is bound by residues Gly-165–Ser-167, Ser-190, and Ile-231.

This sequence belongs to the tetrahydrofolate dehydrogenase/cyclohydrolase family. As to quaternary structure, homodimer.

The enzyme catalyses (6R)-5,10-methylene-5,6,7,8-tetrahydrofolate + NADP(+) = (6R)-5,10-methenyltetrahydrofolate + NADPH. It carries out the reaction (6R)-5,10-methenyltetrahydrofolate + H2O = (6R)-10-formyltetrahydrofolate + H(+). Its pathway is one-carbon metabolism; tetrahydrofolate interconversion. Catalyzes the oxidation of 5,10-methylenetetrahydrofolate to 5,10-methenyltetrahydrofolate and then the hydrolysis of 5,10-methenyltetrahydrofolate to 10-formyltetrahydrofolate. The sequence is that of Bifunctional protein FolD from Trichodesmium erythraeum (strain IMS101).